The chain runs to 407 residues: Arginine biosynthesis bifunctional protein ArgJ (407 aa).

The substrate site is built by threonine 157, lysine 183, threonine 194, glutamate 280, asparagine 402, and threonine 407. Threonine 194 serves as the catalytic Nucleophile.

The protein belongs to the ArgJ family. In terms of assembly, heterotetramer of two alpha and two beta chains.

It localises to the cytoplasm. The catalysed reaction is N(2)-acetyl-L-ornithine + L-glutamate = N-acetyl-L-glutamate + L-ornithine. It catalyses the reaction L-glutamate + acetyl-CoA = N-acetyl-L-glutamate + CoA + H(+). Its pathway is amino-acid biosynthesis; L-arginine biosynthesis; L-ornithine and N-acetyl-L-glutamate from L-glutamate and N(2)-acetyl-L-ornithine (cyclic): step 1/1. It participates in amino-acid biosynthesis; L-arginine biosynthesis; N(2)-acetyl-L-ornithine from L-glutamate: step 1/4. Its function is as follows. Catalyzes two activities which are involved in the cyclic version of arginine biosynthesis: the synthesis of N-acetylglutamate from glutamate and acetyl-CoA as the acetyl donor, and of ornithine by transacetylation between N(2)-acetylornithine and glutamate. This chain is Arginine biosynthesis bifunctional protein ArgJ, found in Bacillus anthracis.